Consider the following 482-residue polypeptide: tRNA sulfurtransferase (482 aa).

The THUMP domain maps to 61-165; it reads LAIRDALTRI…DDRLLLIKGR (105 aa). ATP contacts are provided by residues 183–184, lysine 265, glycine 287, and glutamine 296; that span reads LI. Cysteine 344 and cysteine 456 are disulfide-bonded. In terms of domain architecture, Rhodanese spans 404–482; the sequence is FGPNDVILDI…GFNNVKVYRP (79 aa). Cysteine 456 serves as the catalytic Cysteine persulfide intermediate.

The protein belongs to the ThiI family.

It is found in the cytoplasm. The enzyme catalyses [ThiI sulfur-carrier protein]-S-sulfanyl-L-cysteine + a uridine in tRNA + 2 reduced [2Fe-2S]-[ferredoxin] + ATP + H(+) = [ThiI sulfur-carrier protein]-L-cysteine + a 4-thiouridine in tRNA + 2 oxidized [2Fe-2S]-[ferredoxin] + AMP + diphosphate. It catalyses the reaction [ThiS sulfur-carrier protein]-C-terminal Gly-Gly-AMP + S-sulfanyl-L-cysteinyl-[cysteine desulfurase] + AH2 = [ThiS sulfur-carrier protein]-C-terminal-Gly-aminoethanethioate + L-cysteinyl-[cysteine desulfurase] + A + AMP + 2 H(+). The protein operates within cofactor biosynthesis; thiamine diphosphate biosynthesis. Functionally, catalyzes the ATP-dependent transfer of a sulfur to tRNA to produce 4-thiouridine in position 8 of tRNAs, which functions as a near-UV photosensor. Also catalyzes the transfer of sulfur to the sulfur carrier protein ThiS, forming ThiS-thiocarboxylate. This is a step in the synthesis of thiazole, in the thiamine biosynthesis pathway. The sulfur is donated as persulfide by IscS. The sequence is that of tRNA sulfurtransferase from Escherichia coli (strain ATCC 8739 / DSM 1576 / NBRC 3972 / NCIMB 8545 / WDCM 00012 / Crooks).